The chain runs to 393 residues: ATP phosphoribosyltransferase regulatory subunit (393 aa).

Belongs to the class-II aminoacyl-tRNA synthetase family. HisZ subfamily. As to quaternary structure, heteromultimer composed of HisG and HisZ subunits.

It localises to the cytoplasm. It functions in the pathway amino-acid biosynthesis; L-histidine biosynthesis; L-histidine from 5-phospho-alpha-D-ribose 1-diphosphate: step 1/9. In terms of biological role, required for the first step of histidine biosynthesis. May allow the feedback regulation of ATP phosphoribosyltransferase activity by histidine. This chain is ATP phosphoribosyltransferase regulatory subunit, found in Nitrosospira multiformis (strain ATCC 25196 / NCIMB 11849 / C 71).